A 273-amino-acid polypeptide reads, in one-letter code: Formamidopyrimidine-DNA glycosylase (273 aa).

Pro2 serves as the catalytic Schiff-base intermediate with DNA. Glu3 (proton donor) is an active-site residue. Catalysis depends on Lys60, which acts as the Proton donor; for beta-elimination activity. Residues His94, Arg113, and Arg154 each contribute to the DNA site. The segment at 239–273 (NAYDREGQPCPRCGATIIKTVVAQRGTHYCPECQR) adopts an FPG-type zinc-finger fold. Arg263 acts as the Proton donor; for delta-elimination activity in catalysis.

Belongs to the FPG family. As to quaternary structure, monomer. The cofactor is Zn(2+).

The enzyme catalyses Hydrolysis of DNA containing ring-opened 7-methylguanine residues, releasing 2,6-diamino-4-hydroxy-5-(N-methyl)formamidopyrimidine.. The catalysed reaction is 2'-deoxyribonucleotide-(2'-deoxyribose 5'-phosphate)-2'-deoxyribonucleotide-DNA = a 3'-end 2'-deoxyribonucleotide-(2,3-dehydro-2,3-deoxyribose 5'-phosphate)-DNA + a 5'-end 5'-phospho-2'-deoxyribonucleoside-DNA + H(+). Involved in base excision repair of DNA damaged by oxidation or by mutagenic agents. Acts as a DNA glycosylase that recognizes and removes damaged bases. Has a preference for oxidized purines, such as 7,8-dihydro-8-oxoguanine (8-oxoG). Has AP (apurinic/apyrimidinic) lyase activity and introduces nicks in the DNA strand. Cleaves the DNA backbone by beta-delta elimination to generate a single-strand break at the site of the removed base with both 3'- and 5'-phosphates. The chain is Formamidopyrimidine-DNA glycosylase from Roseiflexus sp. (strain RS-1).